The following is a 560-amino-acid chain: Serine/threonine-protein kinase TOS3 (560 aa).

Positions 50-344 constitute a Protein kinase domain; sequence FEILATLGNG…LADIKVHPFM (295 aa). Residues 56–64 and lysine 79 each bind ATP; that span reads LGNGQYGKV. Aspartate 189 serves as the catalytic Proton acceptor.

Belongs to the protein kinase superfamily. Ser/Thr protein kinase family. In terms of processing, autophosphorylated.

The enzyme catalyses L-seryl-[protein] + ATP = O-phospho-L-seryl-[protein] + ADP + H(+). It carries out the reaction L-threonyl-[protein] + ATP = O-phospho-L-threonyl-[protein] + ADP + H(+). One of the three SNF1 protein kinases (with SAK1 and ELM1) which are required for growth on nonfermentable carbon sources and nonpreferred sugars and for response to environmental stress. Activates SNF1 by phosphorylation of its activation-loop 'Thr-210'. Required for the regulation by SNF1 of the transcription of a large set of genes, the modification the activity of metabolic enzymes, and the control of various nutrient-responsive cellular developmental processes. Also phosphorylates GAL83, MIG1 and SIP2. This chain is Serine/threonine-protein kinase TOS3 (TOS3), found in Saccharomyces cerevisiae (strain ATCC 204508 / S288c) (Baker's yeast).